We begin with the raw amino-acid sequence, 1032 residues long: Suppression of tumorigenicity 18 protein (1032 aa).

Disordered stretches follow at residues 29–76, 162–213, and 325–354; these read RAEE…TNDH, GRDK…LTYN, and RQPKVTDASGRQIFNNKHSPRPERREAKCP. Over residues 40–51 the composition is skewed to basic residues; that stretch reads NKRKSLLMKPRH. Residues 52-76 show a composition bias toward basic and acidic residues; the sequence is YSPDMDCKENPDNRNEDDGLETNDH. 6 CCHHC-type zinc fingers span residues 344-387, 388-431, 700-743, 744-787, 792-835, and 845-888; these read PRPE…PLEI, LAMH…KLAM, RDLK…LKSL, MAAN…GIKM, EEKE…QKEN, and KLNK…IKKV. Positions 353, 358, 371, 377, 397, 402, 415, 421, 709, 714, 727, 733, 753, 758, 771, 777, 801, 806, 819, 825, 854, 859, 872, and 878 each coordinate Zn(2+). The stretch at 905–974 forms a coiled coil; the sequence is IEGDEEIRHL…KELAGLSQAL (70 aa).

Belongs to the MYT1 family. Detected in brain.

Its subcellular location is the nucleus. Its function is as follows. Repressor that binds to DNA sequences containing a bipartite element consisting of a direct repeat of the sequence 5'-AAAGTTT-3' separated by 2-9 nucleotides. Represses basal transcription activity from target promoters. This is Suppression of tumorigenicity 18 protein (St18) from Rattus norvegicus (Rat).